An 82-amino-acid chain; its full sequence is Large ribosomal subunit protein uL23 (82 aa).

This sequence belongs to the universal ribosomal protein uL23 family. In terms of assembly, part of the 50S ribosomal subunit. Contacts protein L29.

Binds to 23S rRNA. One of the proteins that surrounds the polypeptide exit tunnel on the outside of the ribosome. This is Large ribosomal subunit protein uL23 from Methanosarcina acetivorans (strain ATCC 35395 / DSM 2834 / JCM 12185 / C2A).